Here is a 393-residue protein sequence, read N- to C-terminus: GDP-4-keto-6-deoxy-D-mannose 3-dehydratase (393 aa).

Position 30–33 (30–33 (NMFT)) interacts with GDP-4-dehydro-alpha-D-rhamnose. The chain crosses the membrane as a helical span at residues 53–73 (YSVMVSSGSTANLLMIAALFF). Residues 60–61 (GS), Trp92, Glu166, and Ser187 each bind pyridoxal 5'-phosphate. The Proton donor/acceptor role is filled by His192. Position 219 (His219) interacts with L-glutamate. Arg223 lines the GDP-4-dehydro-alpha-D-rhamnose pocket. A pyridoxal 5'-phosphate-binding site is contributed by Asn252. Arg254 contacts L-glutamate. Glu333 is a GDP-4-dehydro-alpha-D-rhamnose binding site.

It belongs to the DegT/DnrJ/EryC1 family. Homodimer. It depends on pyridoxal 5'-phosphate as a cofactor.

Its subcellular location is the cell membrane. It carries out the reaction GDP-4-dehydro-alpha-D-rhamnose + L-glutamate = GDP-4-dehydro-3,6-dideoxy-alpha-D-mannose + 2-oxoglutarate + NH4(+). It participates in nucleotide-sugar metabolism; GDP-L-colitose biosynthesis. Its function is as follows. Involved in the biosynthesis of L-colitose, a 3,6-dideoxyhexose present in the O-antigen region of lipopolysaccharides (LPS), where it serves as an antigenic determinant and is vital for bacterial defense and survival. Catalyzes the removal of the C3'-hydroxyl group from GDP-4-keto-6-deoxy-D-mannose via a combined transamination-deoxygenation reaction. The catalysis is initiated by a transamination step in which pyridoxal 5'-phosphate (PLP) is converted to pyridoxamine 5'-phosphate (PMP) in the presence of L-glutamate. This coenzyme then forms a Schiff base with GDP-4-keto-6-deoxy-D-mannose and the resulting adduct undergoes a PMP-mediated beta-dehydration reaction to give a sugar enamine intermediate, which after tautomerization and hydrolysis to release ammonia yields GDP-4-keto-3,6-dideoxy-D-mannose as a product. The chain is GDP-4-keto-6-deoxy-D-mannose 3-dehydratase from Yersinia pseudotuberculosis.